The chain runs to 467 residues: MFKSVVYSVLAAALVNAGTIPLGELADVAKIGTQEDIFPFLGGAGPYFSFPGDYGISRDLPEGCEMKQLQMLARHGERYPTYSKGATIMKTWYKLSNYTRQFNGSLSFLNDDYEFFIRDDDDLEMETTFANSDNVLNPYTGEMDAKRHAREFLAQYGYMFENQTSFPIFAASSERVHDTAQYFIDGLGDQFNISLQTVSEAMSAGANTLSAGNACPGWDEDANDDILDKYDTTYLDDIAKRLNKENKGLNLTSKDANTLFAWCAYELNARGYSDVCDIFTEDELVRYSYGQDLVSFYQDGPGYDMIRSVGANLFNATLKLLKQSETQDLKVWLSFTHDTDILNYLTTAGIIDDKNNLTAEYVPFMGNTFHKSWYVPQGARVYTEKFQCSNDTYVRYVINDAVVPIETCSTGPGFSCEINDFYDYAEKRVAGTDFLKVCNVSSVSNVTELTFYWDWNTTHYNDTLLKQ.

The signal sequence occupies residues 1–17; the sequence is MFKSVVYSVLAAALVNA. Residue His75 is the Nucleophile of the active site. N-linked (GlcNAc...) asparagine glycans are attached at residues Asn97, Asn103, Asn162, Asn192, Asn250, and Asn315. Asp338 serves as the catalytic Proton donor. Asn356, Asn390, Asn439, Asn445, Asn456, and Asn461 each carry an N-linked (GlcNAc...) asparagine glycan.

The protein belongs to the histidine acid phosphatase family.

It carries out the reaction a phosphate monoester + H2O = an alcohol + phosphate. This chain is Constitutive acid phosphatase (PHO3), found in Saccharomyces cerevisiae (strain ATCC 204508 / S288c) (Baker's yeast).